Consider the following 94-residue polypeptide: Cell division topological specificity factor (94 aa).

This sequence belongs to the MinE family.

Its function is as follows. Prevents the cell division inhibition by proteins MinC and MinD at internal division sites while permitting inhibition at polar sites. This ensures cell division at the proper site by restricting the formation of a division septum at the midpoint of the long axis of the cell. In Clostridioides difficile (strain 630) (Peptoclostridium difficile), this protein is Cell division topological specificity factor.